Consider the following 375-residue polypeptide: UDP-N-acetylglucosamine--N-acetylmuramyl-(pentapeptide) pyrophosphoryl-undecaprenol N-acetylglucosamine transferase (375 aa).

UDP-N-acetyl-alpha-D-glucosamine is bound by residues 13–15, Asn124, Arg165, Ser193, and Gln294; that span reads TGG.

This sequence belongs to the glycosyltransferase 28 family. MurG subfamily.

The protein resides in the cell inner membrane. The enzyme catalyses di-trans,octa-cis-undecaprenyl diphospho-N-acetyl-alpha-D-muramoyl-L-alanyl-D-glutamyl-meso-2,6-diaminopimeloyl-D-alanyl-D-alanine + UDP-N-acetyl-alpha-D-glucosamine = di-trans,octa-cis-undecaprenyl diphospho-[N-acetyl-alpha-D-glucosaminyl-(1-&gt;4)]-N-acetyl-alpha-D-muramoyl-L-alanyl-D-glutamyl-meso-2,6-diaminopimeloyl-D-alanyl-D-alanine + UDP + H(+). It functions in the pathway cell wall biogenesis; peptidoglycan biosynthesis. Functionally, cell wall formation. Catalyzes the transfer of a GlcNAc subunit on undecaprenyl-pyrophosphoryl-MurNAc-pentapeptide (lipid intermediate I) to form undecaprenyl-pyrophosphoryl-MurNAc-(pentapeptide)GlcNAc (lipid intermediate II). In Brucella anthropi (strain ATCC 49188 / DSM 6882 / CCUG 24695 / JCM 21032 / LMG 3331 / NBRC 15819 / NCTC 12168 / Alc 37) (Ochrobactrum anthropi), this protein is UDP-N-acetylglucosamine--N-acetylmuramyl-(pentapeptide) pyrophosphoryl-undecaprenol N-acetylglucosamine transferase.